The chain runs to 376 residues: Methylthioribose-1-phosphate isomerase (376 aa).

The Proton donor role is filled by D256.

The protein belongs to the eIF-2B alpha/beta/delta subunits family. MtnA subfamily.

It localises to the cytoplasm. The protein localises to the nucleus. It carries out the reaction 5-(methylsulfanyl)-alpha-D-ribose 1-phosphate = 5-(methylsulfanyl)-D-ribulose 1-phosphate. Its pathway is amino-acid biosynthesis; L-methionine biosynthesis via salvage pathway; L-methionine from S-methyl-5-thio-alpha-D-ribose 1-phosphate: step 1/6. Functionally, catalyzes the interconversion of methylthioribose-1-phosphate (MTR-1-P) into methylthioribulose-1-phosphate (MTRu-1-P). This chain is Methylthioribose-1-phosphate isomerase, found in Vitis vinifera (Grape).